Consider the following 369-residue polypeptide: Deoxyhypusine synthase (369 aa).

NAD(+) is bound by residues 105-109, 131-133, Glu-137, and Asp-238; these read SNLIS and TAG. Residue 136-137 participates in spermidine binding; that stretch reads EE. Asp-243 contributes to the spermidine binding site. Residue Gly-283 participates in NAD(+) binding. Spermidine is bound at residue His-288. 308–309 provides a ligand contact to NAD(+); it reads TA. Spermidine is bound by residues 314–316 and 323–329; these read GSD and EAVSWGK. Residue Lys-329 is the Nucleophile of the active site. An NAD(+)-binding site is contributed by 342-343; that stretch reads DA.

This sequence belongs to the deoxyhypusine synthase family. The cofactor is NAD(+).

It catalyses the reaction [eIF5A protein]-L-lysine + spermidine = [eIF5A protein]-deoxyhypusine + propane-1,3-diamine. The protein operates within protein modification; eIF5A hypusination. Catalyzes the NAD-dependent oxidative cleavage of spermidine and the subsequent transfer of the butylamine moiety of spermidine to the epsilon-amino group of a critical lysine residue of the eIF-5A precursor protein to form the intermediate deoxyhypusine residue. This is the first step of the post-translational modification of that lysine into an unusual amino acid residue named hypusine. Hypusination is unique to mature eIF-5A factor and is essential for its function. In Rattus norvegicus (Rat), this protein is Deoxyhypusine synthase (Dhps).